A 354-amino-acid chain; its full sequence is MNEAIIQLDHIDITFRQKKRVIEAVKDVTVHINQGDIYGIVGYSGAGKSTLVRVINLLQAPTNGKITVDGDVTFDQGKIQLSANALRQKRRDTGMIFQHFNLMAQKTAKENVAFALRHSSLSKTEKEHKVIELLELVGLSERADNYPAQLSGGQKQRVAIARALANDPKILISDEATSALDPKTTKQILALLQELNRKLGLTIVMITHEMQIVKDICNRVAVMQNGVLIEEGSVLDIFSNPKEALTQKFITTATGIDEALEKINQQDIVKHLPANALLAQLKYAGTSTDEPLLNSIYRQFEVTANILYGNIEILDHIPVGDMIVVLEGQAENILAAEKALHEAGVDVSILKRGA.

The ABC transporter domain maps to 8–250 (LDHIDITFRQ…PKEALTQKFI (243 aa)). 42 to 49 (GYSGAGKS) serves as a coordination point for ATP.

Belongs to the ABC transporter superfamily. Methionine importer (TC 3.A.1.24) family. The complex is composed of two ATP-binding proteins (MetN), two transmembrane proteins (MetI) and a solute-binding protein (MetQ).

The protein localises to the cell membrane. It catalyses the reaction L-methionine(out) + ATP + H2O = L-methionine(in) + ADP + phosphate + H(+). It carries out the reaction D-methionine(out) + ATP + H2O = D-methionine(in) + ADP + phosphate + H(+). In terms of biological role, part of the ABC transporter complex MetNIQ involved in methionine import. Responsible for energy coupling to the transport system. The sequence is that of Methionine import ATP-binding protein MetN from Streptococcus pyogenes serotype M18 (strain MGAS8232).